The primary structure comprises 660 residues: Alpha-1,2-mannosyltransferase MNN21 (660 aa).

Over 1-17 the chain is Cytoplasmic; sequence MFQQLTYRLRLFRRRHK. The chain crosses the membrane as a helical span at residues 18–38; sequence YIFINSIFLSVIIIFLIYSYW. At 39 to 660 the chain is on the extracellular side; sequence SNLPAEDNSA…FLESTQNITD (622 aa). A disordered region spans residues 75–125; the sequence is PFEEKKPQVNPNNNQEVGVESGASEISQHKQQQQQQQHAKEPTTKTSSKSL. An N-linked (GlcNAc...) asparagine glycan is attached at Asn-657.

This sequence belongs to the MNN1/MNT family.

The protein resides in the golgi apparatus membrane. The protein operates within protein modification; protein glycosylation. Its function is as follows. Alpha-1,2-mannosyltransferase required for cell wall integrity. Responsible for addition of the first alpha-1,2-linked mannose to form the branches on the mannan backbone of oligosaccharides. Addition of alpha-1,2-mannose is required for stabilization of the alpha-1,6-mannose backbone and hence regulates mannan fibril length; and is important for both immune recognition and virulence. The polypeptide is Alpha-1,2-mannosyltransferase MNN21 (MNN21) (Candida albicans (strain SC5314 / ATCC MYA-2876) (Yeast)).